The following is a 550-amino-acid chain: CTP synthase (550 aa).

The amidoligase domain stretch occupies residues 1–271; that stretch reads MTRYIFITGG…DAEVLDVFGM (271 aa). Position 13 (S13) interacts with CTP. S13 is a binding site for UTP. 14-19 lines the ATP pocket; sequence SLGKGL. Residue Y54 participates in L-glutamine binding. Position 71 (D71) interacts with ATP. Mg(2+) contacts are provided by D71 and E145. Residues 152–154, 192–197, and K228 contribute to the CTP site; these read DIE and KTKPTQ. Residues 192 to 197 and K228 contribute to the UTP site; that span reads KTKPTQ. The Glutamine amidotransferase type-1 domain occupies 297–549; that stretch reads TIAVVGKYTV…IAAAKEQGRL (253 aa). G361 is an L-glutamine binding site. C388 serves as the catalytic Nucleophile; for glutamine hydrolysis. L-glutamine-binding positions include 389–392, E412, and R477; that span reads FGMQ. Catalysis depends on residues H522 and E524.

Belongs to the CTP synthase family. In terms of assembly, homotetramer.

It carries out the reaction UTP + L-glutamine + ATP + H2O = CTP + L-glutamate + ADP + phosphate + 2 H(+). The catalysed reaction is L-glutamine + H2O = L-glutamate + NH4(+). The enzyme catalyses UTP + NH4(+) + ATP = CTP + ADP + phosphate + 2 H(+). It functions in the pathway pyrimidine metabolism; CTP biosynthesis via de novo pathway; CTP from UDP: step 2/2. Its activity is regulated as follows. Allosterically activated by GTP, when glutamine is the substrate; GTP has no effect on the reaction when ammonia is the substrate. The allosteric effector GTP functions by stabilizing the protein conformation that binds the tetrahedral intermediate(s) formed during glutamine hydrolysis. Inhibited by the product CTP, via allosteric rather than competitive inhibition. Functionally, catalyzes the ATP-dependent amination of UTP to CTP with either L-glutamine or ammonia as the source of nitrogen. Regulates intracellular CTP levels through interactions with the four ribonucleotide triphosphates. In Caulobacter sp. (strain K31), this protein is CTP synthase.